The primary structure comprises 443 residues: Phosphoglucosamine mutase (443 aa).

Ser-101 functions as the Phosphoserine intermediate in the catalytic mechanism. Residues Ser-101, Asp-239, Asp-241, and Asp-243 each coordinate Mg(2+). Ser-101 is subject to Phosphoserine.

Belongs to the phosphohexose mutase family. Requires Mg(2+) as cofactor. Post-translationally, activated by phosphorylation.

It catalyses the reaction alpha-D-glucosamine 1-phosphate = D-glucosamine 6-phosphate. In terms of biological role, catalyzes the conversion of glucosamine-6-phosphate to glucosamine-1-phosphate. The polypeptide is Phosphoglucosamine mutase (Francisella tularensis subsp. tularensis (strain WY96-3418)).